The primary structure comprises 54 residues: Light-harvesting protein B-880 beta chain (54 aa).

Residues 1–20 are Cytoplasmic-facing; the sequence is AEDRSSLSGVSDAEAKEFHA. Residues His-19 and His-37 each coordinate a bacteriochlorophyll. Residues 21-43 form a helical membrane-spanning segment; it reads LFVSSFMGFMVVAVLAHVLAWAW. Residues 44 to 54 are Periplasmic-facing; it reads RPWIPGPKGWA.

This sequence belongs to the antenna complex beta subunit family. The core complex is formed by different alpha and beta chains, binding bacteriochlorophyll molecules, and arranged most probably in tetrameric structures disposed around the reaction center. The non-pigmented gamma chains may constitute additional components.

The protein resides in the cell inner membrane. Antenna complexes are light-harvesting systems, which transfer the excitation energy to the reaction centers. This chain is Light-harvesting protein B-880 beta chain, found in Rhodoblastus acidophilus (Rhodopseudomonas acidophila).